A 355-amino-acid chain; its full sequence is Probable butyrate kinase (355 aa).

It belongs to the acetokinase family.

Its subcellular location is the cytoplasm. It catalyses the reaction butanoate + ATP = butanoyl phosphate + ADP. This is Probable butyrate kinase from Listeria welshimeri serovar 6b (strain ATCC 35897 / DSM 20650 / CCUG 15529 / CIP 8149 / NCTC 11857 / SLCC 5334 / V8).